Consider the following 174-residue polypeptide: Small ribosomal subunit protein uS5 (174 aa).

The 64-residue stretch at 16-79 folds into the S5 DRBM domain; the sequence is FSELIVSVRR…NAARKNMIRV (64 aa).

The protein belongs to the universal ribosomal protein uS5 family. As to quaternary structure, part of the 30S ribosomal subunit. Contacts proteins S4 and S8.

In terms of biological role, with S4 and S12 plays an important role in translational accuracy. Located at the back of the 30S subunit body where it stabilizes the conformation of the head with respect to the body. This Ehrlichia ruminantium (strain Gardel) protein is Small ribosomal subunit protein uS5.